Consider the following 528-residue polypeptide: Adhesion G-protein coupled receptor G5 (528 aa).

Positions 1-21 (MDHCGALFLCLCLLTLQNATT) are cleaved as a signal peptide. Topologically, residues 22 to 245 (ETWEELLSYM…SPALVPAELL (224 aa)) are extracellular. N-linked (GlcNAc...) asparagine glycans are attached at residues asparagine 58, asparagine 65, asparagine 146, asparagine 147, asparagine 173, and asparagine 179. The region spanning 78–239 (FKLSCDFSGL…AVLMQLSPAL (162 aa)) is the GAIN-B domain. 2 disulfides stabilise this stretch: cysteine 189–cysteine 221 and cysteine 209–cysteine 223. The tract at residues 189 to 239 (CVFWKEGARKQPWGGWSPEGCRTEQPSHSQVLCRCNHLTYFAVLMQLSPAL) is GPS. A stachel region spans residues 228–236 (YFAVLMQLS). A helical transmembrane segment spans residues 246-271 (APLTYISLVGCSISIVASLITVLLHF). Residues 272-280 (HFRKQSDSL) are Cytoplasmic-facing. A helical membrane pass occupies residues 281-304 (TRIHMNLHASVLLLNIAFLLSPAF). The Extracellular portion of the chain corresponds to 305–314 (AMSPVPGSAC). Cysteine 314 and cysteine 404 are disulfide-bonded. Residues 315-340 (TALAAALHYALLSCLTWMAIEGFNLY) form a helical membrane-spanning segment. Residues 341 to 353 (LLLGRVYNIYIRR) are Cytoplasmic-facing. The chain crosses the membrane as a helical span at residues 354–377 (YVFKLGVLGWGAPALLVLLSLSVK). The Extracellular portion of the chain corresponds to 378–410 (SSVYGPCTIPVFDSWENGTGFQNMSICWVRSPV). N-linked (GlcNAc...) asparagine glycans are attached at residues asparagine 394 and asparagine 400. A helical transmembrane segment spans residues 411–435 (VHSVLVMGYGGLTSLFNLVVLAWAL). Topologically, residues 436-455 (WTLRRLRERADAPSVRACHD) are cytoplasmic. Residues 456 to 477 (TVTVLGLTVLLGTTWALAFFSF) form a helical membrane-spanning segment. The Extracellular segment spans residues 478 to 481 (GVFL). A helical transmembrane segment spans residues 482–505 (LPQLFLFTILNSLYGFFLFLWFCS). Over 506–528 (QRCRSEAEAKAQIEAFSSSQTTQ) the chain is Cytoplasmic.

It belongs to the G-protein coupled receptor 2 family. Adhesion G-protein coupled receptor (ADGR) subfamily. As to quaternary structure, heterodimer of 2 chains generated by proteolytic processing; the large extracellular N-terminal fragment and the membrane-bound C-terminal fragment predominantly remain associated and non-covalently linked. Autoproteolytically processed at the GPS region of the GAIN-B domain; this cleavage modulates receptor activity. In terms of processing, N-glycsylated. As to expression, expressed in immune cells. Primarily found in granulocytes. Found in eosinophils.

The protein resides in the cell membrane. Its activity is regulated as follows. Forms a heterodimer of 2 chains generated by proteolytic processing that remain associated through non-covalent interactions mediated by the GAIN-B domain. In the inactivated receptor, the Stachel sequence (also named stalk) is embedded in the GAIN-B domain, where it adopts a beta-strand conformation. On activation, the Stachel moves into the 7 transmembrane region and adopts a twisted hook-shaped configuration that forms contacts within the receptor, leading to coupling of a G-alpha protein, which activates signaling. The cleaved GAIN-B and N-terminal domains can then dissociate from the rest of the receptor. Functionally, orphan adhesion G-protein coupled receptor (aGPCR). Ligand binding causes a conformation change that triggers signaling via guanine nucleotide-binding proteins (G proteins) and modulates the activity of downstream effectors, such as adenylate cyclase. ADGRG5 is specifically coupled to G(s) G proteins and mediates activation of adenylate cyclase activity. This Homo sapiens (Human) protein is Adhesion G-protein coupled receptor G5.